A 115-amino-acid chain; its full sequence is Non-specific lipid-transfer protein Cw18 (115 aa).

An N-terminal signal peptide occupies residues 1–25 (MARTAATKLALVALVAAMLLVAADA). Cystine bridges form between Cys29–Cys77, Cys39–Cys54, Cys55–Cys97, and Cys75–Cys111.

This sequence belongs to the plant LTP family. Highly expressed in leaves and coleoptiles. No expression in roots.

Plant non-specific lipid-transfer proteins transfer phospholipids as well as galactolipids across membranes. May play a role in wax or cutin deposition in the cell walls of expanding epidermal cells and certain secretory tissues. This chain is Non-specific lipid-transfer protein Cw18 (CW18), found in Hordeum vulgare (Barley).